Here is a 286-residue protein sequence, read N- to C-terminus: tRNA pseudouridine synthase B (286 aa).

The active-site Nucleophile is D40.

Belongs to the pseudouridine synthase TruB family. Type 1 subfamily.

It carries out the reaction uridine(55) in tRNA = pseudouridine(55) in tRNA. In terms of biological role, responsible for synthesis of pseudouridine from uracil-55 in the psi GC loop of transfer RNAs. This is tRNA pseudouridine synthase B from Mesoplasma florum (strain ATCC 33453 / NBRC 100688 / NCTC 11704 / L1) (Acholeplasma florum).